Reading from the N-terminus, the 695-residue chain is N-terminal acetyltransferase A complex subunit-like protein C418.02 (695 aa).

TPR repeat units lie at residues 8 to 41 (EAFL…KPKH), 43 to 75 (DSVA…DPKS), 76 to 109 (QFCW…SPNN), 111 to 143 (SLWY…DSSN), 145 to 177 (EYRL…CNLS), 217 to 250 (FNFE…FPNR), 262 to 296 (WNFY…GISV), 365 to 398 (LWCT…TPTY), 399 to 432 (PELF…DKSD), and 477 to 510 (VWFL…YKKW).

As to quaternary structure, component of the N-terminal acetyltransferase A (NatA) complex.

It is found in the cytoplasm. The protein resides in the nucleus. Functionally, non-catalytic component of the NatA N-terminal acetyltransferase, which catalyzes acetylation of proteins beginning with Met-Ser, Met-Gly and Met-Ala. N-acetylation plays a role in normal eukaryotic translation and processing, protect against proteolytic degradation and protein turnover. This Schizosaccharomyces pombe (strain 972 / ATCC 24843) (Fission yeast) protein is N-terminal acetyltransferase A complex subunit-like protein C418.02.